The primary structure comprises 225 residues: UPF0758 protein Vapar_4033 (225 aa).

Residues 103 to 225 (VFDSPGTVKQ…SYSMAEKGLL (123 aa)) form the MPN domain. Histidine 174, histidine 176, and aspartate 187 together coordinate Zn(2+). Residues 174-187 (HNHPSGSIEPSRAD) carry the JAMM motif motif.

This sequence belongs to the UPF0758 family.

The chain is UPF0758 protein Vapar_4033 from Variovorax paradoxus (strain S110).